The primary structure comprises 319 residues: Cobalamin biosynthesis protein CobD (319 aa).

4 helical membrane passes run 55 to 75 (AVMWLVVVGVTWAVSWGVLAL), 78 to 98 (EIHPWFGWLVEIWMIFTVLAG), 153 to 173 (VDGIIAPLFFLFLGGAPLAMA), and 296 to 316 (LMWVASTLALALFIAVRCLLV).

Belongs to the CobD/CbiB family.

It localises to the cell membrane. It functions in the pathway cofactor biosynthesis; adenosylcobalamin biosynthesis. Functionally, converts cobyric acid to cobinamide by the addition of aminopropanol on the F carboxylic group. The protein is Cobalamin biosynthesis protein CobD of Citrobacter koseri (strain ATCC BAA-895 / CDC 4225-83 / SGSC4696).